The following is a 157-amino-acid chain: uncharacterized protein (157 aa).

It to E.coli YcjD and H.influenzae HI_0925.

This is an uncharacterized protein from Haemophilus influenzae (strain ATCC 51907 / DSM 11121 / KW20 / Rd).